Consider the following 233-residue polypeptide: Protein lin-7 homolog A (233 aa).

The L27 domain maps to 25 to 80 (LDRDVARAIELLEKLQESGEVPVHKLQSLKKVLQSEFCTAIREVYQYMHETITVNG). Positions 108–190 (VVELPKTDEG…SVKLVVRYTP (83 aa)) constitute a PDZ domain.

It belongs to the lin-7 family. Forms a complex with CASK and CASKIN1. Component of the brain-specific heterotrimeric complex (LIN-10-LIN-2-LIN-7 complex) composed of at least APBA1, CASK, and LIN7, which associates with the motor protein KIF17 to transport vesicles along microtubules. Can also interact with other modular proteins containing protein-protein interaction domains like PALS1, PALS2, MPP7, DLG1, DLG2 and DLG3 through its L27 domain. Interacts with DLG4, GRIN2B and MARCHF11 as well as CDH1 and CTNNB1, the channels KCNJ12/Kir2.2, KCNJ4/Kir2.3 and probably KCNJ2/Kir2.1 and SLC6A12/BGT-1 via its PDZ domain. The association of LIN7A with cadherin and beta-catenin is calcium-dependent, occurs at synaptic junctions and requires the actin cytoskeleton. Interacts with EGFR, ERBB2, ERBB3 and ERBB4 with both PDZ and KID domains. Associates with KIF17 via APBA1. Interacts with HTR4. Forms a tripartite complex composed of DLG1, MPP7 and LIN7 (LIN7A or LIN7C).

It localises to the cell membrane. The protein resides in the basolateral cell membrane. Its subcellular location is the cell junction. The protein localises to the postsynaptic density membrane. It is found in the tight junction. Its function is as follows. Plays a role in establishing and maintaining the asymmetric distribution of channels and receptors at the plasma membrane of polarized cells. Forms membrane-associated multiprotein complexes that may regulate delivery and recycling of proteins to the correct membrane domains. The tripartite complex composed of LIN7 (LIN7A, LIN7B or LIN7C), CASK and APBA1 associates with the motor protein KIF17 to transport vesicles containing N-methyl-D-aspartate (NMDA) receptor subunit NR2B along microtubules. This complex may have the potential to couple synaptic vesicle exocytosis to cell adhesion in brain. Ensures the proper localization of GRIN2B (subunit 2B of the NMDA receptor) to neuronal postsynaptic density and may function in localizing synaptic vesicles at synapses where it is recruited by beta-catenin and cadherin. Required to localize Kir2 channels, GABA transporter (SLC6A12) and EGFR/ERBB1, ERBB2, ERBB3 and ERBB4 to the basolateral membrane of epithelial cells. The chain is Protein lin-7 homolog A (LIN7A) from Bos taurus (Bovine).